The primary structure comprises 556 residues: Transcription factor IIIB 70 kDa subunit (556 aa).

The TFIIB-type zinc-finger motif lies at 8–41 (SSRKCKNCGSTDFVRDISNTTNELICKVCGLVTE). Residues Cys-12, Cys-15, Cys-33, and Cys-36 each contribute to the Zn(2+) site. 2 consecutive repeat copies span residues 98–174 (LKAV…TFLK) and 193–272 (IQHF…RLNE). The segment at 98 to 272 (LKAVSYALNI…EETLQQRLNE (175 aa)) is interaction with TBP and with the Pol III subunit C34. Positions 284 to 556 (KEFRDDETEV…DAINGLFGQK (273 aa)) are interaction with TBP. Disordered stretches follow at residues 287-309 (RDDETEVNEGERSAESKPPSFDK) and 477-501 (ADLASGNTSLRKKRSKRTNRNQSSA). The span at 295–309 (EGERSAESKPPSFDK) shows a compositional bias: basic and acidic residues. Basic residues predominate over residues 486-495 (LRKKRSKRTN).

Belongs to the TFIIB family. TFIIIB comprises the TATA-binding protein (TBP), the B-related factor (BRF) and a 70 kDa polypeptide.

The protein localises to the nucleus. In terms of biological role, general activator of RNA polymerase III transcription. Interacts with TBP. Binds to Pol III subunit C34 and to the TAU135 component of TFIIIC. The polypeptide is Transcription factor IIIB 70 kDa subunit (TDS4) (Kluyveromyces lactis (strain ATCC 8585 / CBS 2359 / DSM 70799 / NBRC 1267 / NRRL Y-1140 / WM37) (Yeast)).